The sequence spans 247 residues: ATP synthase subunit a, chloroplastic (247 aa).

A run of 5 helical transmembrane segments spans residues 36–56 (GQVL…SIFG), 95–115 (VPFI…GALV), 134–154 (INTT…AGFS), 199–219 (LVVG…LMLL), and 220–240 (GLFT…AYIG).

This sequence belongs to the ATPase A chain family. F-type ATPases have 2 components, CF(1) - the catalytic core - and CF(0) - the membrane proton channel. CF(1) has five subunits: alpha(3), beta(3), gamma(1), delta(1), epsilon(1). CF(0) has four main subunits: a, b, b' and c.

Its subcellular location is the plastid. The protein localises to the chloroplast thylakoid membrane. In terms of biological role, key component of the proton channel; it plays a direct role in the translocation of protons across the membrane. This chain is ATP synthase subunit a, chloroplastic, found in Mesostigma viride (Green alga).